Reading from the N-terminus, the 362-residue chain is Peptide chain release factor 1 (362 aa).

At glutamine 238 the chain carries N5-methylglutamine.

It belongs to the prokaryotic/mitochondrial release factor family. In terms of processing, methylated by PrmC. Methylation increases the termination efficiency of RF1.

The protein localises to the cytoplasm. In terms of biological role, peptide chain release factor 1 directs the termination of translation in response to the peptide chain termination codons UAG and UAA. In Psychrobacter arcticus (strain DSM 17307 / VKM B-2377 / 273-4), this protein is Peptide chain release factor 1.